Consider the following 396-residue polypeptide: Elongation factor Tu (396 aa).

In terms of domain architecture, tr-type G spans 10–206 (KPHVNIGTIG…AVDAYIPEPE (197 aa)). The G1 stretch occupies residues 19-26 (GHVDHGKT). Residue 19-26 (GHVDHGKT) coordinates GTP. Thr-26 provides a ligand contact to Mg(2+). Residues 60–64 (GITIS) form a G2 region. The interval 81–84 (DCPG) is G3. GTP contacts are provided by residues 81-85 (DCPGH) and 136-139 (NKVD). The interval 136 to 139 (NKVD) is G4. The G5 stretch occupies residues 174 to 176 (SAL).

Belongs to the TRAFAC class translation factor GTPase superfamily. Classic translation factor GTPase family. EF-Tu/EF-1A subfamily. As to quaternary structure, monomer.

Its subcellular location is the cytoplasm. It carries out the reaction GTP + H2O = GDP + phosphate + H(+). Its function is as follows. GTP hydrolase that promotes the GTP-dependent binding of aminoacyl-tRNA to the A-site of ribosomes during protein biosynthesis. In Magnetococcus marinus (strain ATCC BAA-1437 / JCM 17883 / MC-1), this protein is Elongation factor Tu.